A 103-amino-acid chain; its full sequence is Pyrimidine/purine nucleoside phosphorylase (103 aa).

The protein belongs to the nucleoside phosphorylase PpnP family.

The enzyme catalyses a purine D-ribonucleoside + phosphate = a purine nucleobase + alpha-D-ribose 1-phosphate. It catalyses the reaction adenosine + phosphate = alpha-D-ribose 1-phosphate + adenine. It carries out the reaction cytidine + phosphate = cytosine + alpha-D-ribose 1-phosphate. The catalysed reaction is guanosine + phosphate = alpha-D-ribose 1-phosphate + guanine. The enzyme catalyses inosine + phosphate = alpha-D-ribose 1-phosphate + hypoxanthine. It catalyses the reaction thymidine + phosphate = 2-deoxy-alpha-D-ribose 1-phosphate + thymine. It carries out the reaction uridine + phosphate = alpha-D-ribose 1-phosphate + uracil. The catalysed reaction is xanthosine + phosphate = alpha-D-ribose 1-phosphate + xanthine. In terms of biological role, catalyzes the phosphorolysis of diverse nucleosides, yielding D-ribose 1-phosphate and the respective free bases. Can use uridine, adenosine, guanosine, cytidine, thymidine, inosine and xanthosine as substrates. Also catalyzes the reverse reactions. This chain is Pyrimidine/purine nucleoside phosphorylase, found in Citrifermentans bemidjiense (strain ATCC BAA-1014 / DSM 16622 / JCM 12645 / Bem) (Geobacter bemidjiensis).